The following is a 559-amino-acid chain: 3-aminoavenalumate diazotase (559 aa).

Residue serine 181 coordinates Mg(2+). Residues alanine 227, glycine 332, and serine 336 each contribute to the ATP site. Glutamate 337 contacts Mg(2+). Aspartate 416 and arginine 437 together coordinate ATP.

It belongs to the ATP-dependent AMP-binding enzyme family. Mg(2+) is required as a cofactor.

It carries out the reaction 3-aminoavenalumate + nitrite + ATP = 3-diazoavenalumate + AMP + diphosphate + H2O. The enzyme catalyses (E)-3-aminocoumarate + nitrite + ATP + H(+) = (E)-3-diazocoumarate + AMP + diphosphate + H2O. It catalyses the reaction 3-amino-4-hydroxybenzoate + nitrite + ATP + H(+) = 3-diazo-4-hydroxybenzoate + AMP + diphosphate + H2O. Its function is as follows. Ligase involved in the biosynthesis of avenalumic acid (AVA). Catalyzes the diazotization of 3-aminoavenalumic acid (3-AAA) to 3-diazoavenalumic acid (3-DAA). It can also act on 3-aminocoumaric acid (3-ACA) and 3-amino-4-hydroxybenzoic acid (3,4-AHBA) with lower activity. The sequence is that of 3-aminoavenalumate diazotase from Streptomyces sp.